Consider the following 556-residue polypeptide: Endoglucanase 22 (556 aa).

Residues 1 to 33 (MSRGRARLQPPPPGTRTTTLAAVLVLVLLAVVA) form the signal peptide. Aspartate 108 serves as the catalytic Nucleophile. Residues histidine 450, aspartate 502, and glutamate 511 contribute to the active site.

This sequence belongs to the glycosyl hydrolase 9 (cellulase E) family.

It localises to the secreted. The catalysed reaction is Endohydrolysis of (1-&gt;4)-beta-D-glucosidic linkages in cellulose, lichenin and cereal beta-D-glucans.. The chain is Endoglucanase 22 (GLU11) from Oryza sativa subsp. japonica (Rice).